We begin with the raw amino-acid sequence, 2017 residues long: Rootletin (2017 aa).

2 coiled-coil regions span residues 70–262 and 318–444; these read ATEM…KVTN and ERDL…LETE. Polar residues predominate over residues 464–483; the sequence is SESGVQLSGSERTADASNGS. Residues 464–518 form a disordered region; sequence SESGVQLSGSERTADASNGSLRGLSGQRTPSPPRRSSPGRGRSPRRGPSPACSDS. Positions 499–513 are enriched in low complexity; it reads SSPGRGRSPRRGPSP. 2 coiled-coil regions span residues 546-1058 and 1091-1438; these read QDLL…LAES and EMER…GLRS. Disordered regions lie at residues 1184 to 1226 and 1443 to 1575; these read LRES…RSAV and GLGL…GRLS. A phosphoserine mark is found at Ser-1460, Ser-1470, Ser-1476, Ser-1483, Ser-1486, Ser-1490, and Ser-1496. The stretch at 1505-1704 forms a coiled coil; it reads EAVRGALREF…DSEVKAGTLQ (200 aa). Positions 1510-1529 are enriched in basic and acidic residues; it reads ALREFLQELRSAQRERDELR. Phosphoserine is present on residues Ser-1575 and Ser-1660. The tract at residues 1962–2017 is disordered; that stretch reads RSAQAQTERTLEARERAHRQRVRGLEEQVSTLKGQLQQELRRSSAPFSPPSGPPEK. Positions 1989–1999 are enriched in polar residues; the sequence is QVSTLKGQLQQ. Positions 2008–2017 are enriched in pro residues; it reads FSPPSGPPEK.

The protein belongs to the rootletin family. In terms of assembly, homomer. Interacts with KLC3, NEK2 and the N-terminus of CEP250. Interacts with CEP44. Interacts with CCDC102B (via N-terminus). In terms of processing, phosphorylated by NEK2 which may regulate its association with centrosomes.

The protein resides in the cytoplasm. It localises to the cytoskeleton. Its subcellular location is the microtubule organizing center. The protein localises to the centrosome. It is found in the centriole. The protein resides in the cilium basal body. Functionally, major structural component of the ciliary rootlet, a cytoskeletal-like structure in ciliated cells which originates from the basal body at the proximal end of a cilium and extends proximally toward the cell nucleus. Furthermore, is required for the correct positioning of the cilium basal body relative to the cell nucleus, to allow for ciliogenesis. Contributes to centrosome cohesion before mitosis. This Homo sapiens (Human) protein is Rootletin.